The following is a 131-amino-acid chain: Peptide methionine sulfoxide reductase MsrB (131 aa).

A MsrB domain is found at 8–130; it reads LDEWRSMLDP…NSVCIDLRPR (123 aa). Residues cysteine 47, cysteine 50, cysteine 96, and cysteine 99 each contribute to the Zn(2+) site. Cysteine 119 serves as the catalytic Nucleophile.

This sequence belongs to the MsrB Met sulfoxide reductase family. Zn(2+) is required as a cofactor.

The enzyme catalyses L-methionyl-[protein] + [thioredoxin]-disulfide + H2O = L-methionyl-(R)-S-oxide-[protein] + [thioredoxin]-dithiol. The sequence is that of Peptide methionine sulfoxide reductase MsrB from Pseudomonas putida (strain ATCC 47054 / DSM 6125 / CFBP 8728 / NCIMB 11950 / KT2440).